Reading from the N-terminus, the 871-residue chain is Alanine--tRNA ligase (871 aa).

Zn(2+) contacts are provided by H563, H567, C665, and H669.

This sequence belongs to the class-II aminoacyl-tRNA synthetase family. Zn(2+) serves as cofactor.

The protein resides in the cytoplasm. It catalyses the reaction tRNA(Ala) + L-alanine + ATP = L-alanyl-tRNA(Ala) + AMP + diphosphate. In terms of biological role, catalyzes the attachment of alanine to tRNA(Ala) in a two-step reaction: alanine is first activated by ATP to form Ala-AMP and then transferred to the acceptor end of tRNA(Ala). Also edits incorrectly charged Ser-tRNA(Ala) and Gly-tRNA(Ala) via its editing domain. The polypeptide is Alanine--tRNA ligase (Christiangramia forsetii (strain DSM 17595 / CGMCC 1.15422 / KT0803) (Gramella forsetii)).